Here is a 615-residue protein sequence, read N- to C-terminus: Sodium-dependent dopamine transporter (615 aa).

A disordered region spans residues 1 to 39 (MQLVPTDDPDEKIGRTSNGMQNATLPIDGPVNTEPKDPA). At 1-46 (MQLVPTDDPDEKIGRTSNGMQNATLPIDGPVNTEPKDPAREQWSGK) the chain is on the cytoplasmic side. Positions 15–24 (RTSNGMQNAT) are enriched in polar residues. A helical transmembrane segment spans residues 47 to 72 (LDFLLSVVGFAVDLGNIWRFPYLCFK). Na(+)-binding residues include Gly-55, Ala-57, Val-58, and Asn-62. Residues 73–76 (NGGG) lie on the Extracellular side of the membrane. Residues 77-100 (VFLIPYSIMVLLTGVPLFYMELCL) traverse the membrane as a helical segment. Over 101 to 120 (GQYYRKGAITTWGRICPLFK) the chain is Cytoplasmic. A helical transmembrane segment spans residues 121–151 (GIGYCVILTAFYVDFFYNVILAWGLHYLYTS). Topologically, residues 152-229 (FSFNLPWASC…IRSVTDLGNV (78 aa)) are extracellular. The cysteines at positions 161 and 170 are disulfide-linked. Asn-162 and Asn-187 each carry an N-linked (GlcNAc...) asparagine glycan. A helical transmembrane segment spans residues 230 to 250 (RWDIALSLFVVYLICYFSMWK). At 251-253 (GIH) the chain is on the cytoplasmic side. The chain crosses the membrane as a helical span at residues 254 to 278 (TSGKVVWFTALFPYVVLGILFIRGV). The Extracellular segment spans residues 279 to 302 (TLPGWQNGIEYYLRPNFEMLKRPS). Residues 303–328 (VWQDAATQVFFSLGPGFGVLMAYSSY) form a helical membrane-spanning segment. Position 314 (Ser-314) interacts with Na(+). The Cytoplasmic segment spans residues 329-334 (NDFHNN). Residues 335-358 (VYVDALFTSFINCATSFLSGFVIF) form a helical membrane-spanning segment. Asn-346 contributes to the Na(+) binding site. At 359–398 (SVLGYMSCKSGKPIEAVAQEGPGLVFVVYPEALSTMPYAP) the chain is on the extracellular side. The chain crosses the membrane as a helical span at residues 399-424 (FWSVLFFLMLMTLGLDSSFGGSEAII). 3 residues coordinate Na(+): Leu-411, Asp-414, and Ser-415. Topologically, residues 425–439 (TGLSDEFPILKKNRE) are cytoplasmic. A helical transmembrane segment spans residues 440–460 (VFVGCLFAFYMVIGIAMCTEG). Residue Gly-461 is a topological domain, extracellular. A helical membrane pass occupies residues 462–488 (ILIMEWLIIYGTTWGLLIAVFCEAMVI). Residues 489–518 (AYIYGLRQFVHDVKEMMGFRPGNYWKFCWS) lie on the Cytoplasmic side of the membrane. Residues 519 to 541 (CAAPFILLSMITSNFINYQALTY) traverse the membrane as a helical segment. The Extracellular segment spans residues 542 to 544 (QDY). A helical membrane pass occupies residues 545–565 (TYPTAANVIGIIFALSGASFI). At 566 to 615 (PLVGIYKFVNARGNTISEKWQRVTMPYRKRPNQTEYIPIPTTQPHSDIML) the chain is on the cytoplasmic side.

Belongs to the sodium:neurotransmitter symporter (SNF) (TC 2.A.22) family.

Its subcellular location is the cell membrane. Its function is as follows. Dopamine transporter. Terminates the action of dopamine by its high affinity sodium-dependent reuptake into presynaptic terminals. Plays a role in the learned avoidance behavior of animals exposed to food that induces mitochondrial stress. The chain is Sodium-dependent dopamine transporter from Caenorhabditis elegans.